Here is a 452-residue protein sequence, read N- to C-terminus: Probable dihydrolipoyllysine-residue succinyltransferase component of 2-oxoglutarate dehydrogenase complex, mitochondrial (452 aa).

One can recognise a Lipoyl-binding domain in the interval 42 to 117; sequence STRIKTPPFP…TIDQDIAVID (76 aa). Residue Lys-83 is modified to N6-lipoyllysine. Residues 119 to 225 are disordered; the sequence is SAAPPEGGSA…FSRNEDRVKM (107 aa). Basic and acidic residues-rich tracts occupy residues 130 to 144, 154 to 170, and 195 to 209; these read PKKDEVKTADADAAK, KPIEEKPMPDLGAEQKE, and AKSEPVKQSKPKATE. Residues His-424 and Asp-428 contribute to the active site.

The protein belongs to the 2-oxoacid dehydrogenase family. (R)-lipoate serves as cofactor.

It localises to the mitochondrion. The enzyme catalyses N(6)-[(R)-dihydrolipoyl]-L-lysyl-[protein] + succinyl-CoA = N(6)-[(R)-S(8)-succinyldihydrolipoyl]-L-lysyl-[protein] + CoA. It participates in amino-acid degradation; L-lysine degradation via saccharopine pathway; glutaryl-CoA from L-lysine: step 6/6. The 2-oxoglutarate dehydrogenase complex catalyzes the overall conversion of 2-oxoglutarate to succinyl-CoA and CO(2). It contains multiple copies of three enzymatic components: 2-oxoglutarate dehydrogenase (E1), dihydrolipoamide succinyltransferase (E2) and lipoamide dehydrogenase (E3). In Schizosaccharomyces pombe (strain 972 / ATCC 24843) (Fission yeast), this protein is Probable dihydrolipoyllysine-residue succinyltransferase component of 2-oxoglutarate dehydrogenase complex, mitochondrial (kgd2).